Reading from the N-terminus, the 301-residue chain is Glycine--tRNA ligase alpha subunit (301 aa).

It belongs to the class-II aminoacyl-tRNA synthetase family. Tetramer of two alpha and two beta subunits.

Its subcellular location is the cytoplasm. The enzyme catalyses tRNA(Gly) + glycine + ATP = glycyl-tRNA(Gly) + AMP + diphosphate. In Shewanella loihica (strain ATCC BAA-1088 / PV-4), this protein is Glycine--tRNA ligase alpha subunit.